A 180-amino-acid polypeptide reads, in one-letter code: Putative 5'(3')-deoxyribonucleotidase (180 aa).

The active-site Nucleophile is the D9. Mg(2+) is bound by residues D9, D11, and D135. D11 serves as the catalytic Proton donor.

The protein belongs to the 5'(3')-deoxyribonucleotidase family. Mg(2+) serves as cofactor.

In terms of biological role, dephosphorylates the 5' and 2'(3')-phosphates of deoxyribonucleotides. This Staphylococcus aureus (strain Mu50 / ATCC 700699) protein is Putative 5'(3')-deoxyribonucleotidase.